A 356-amino-acid chain; its full sequence is Putative ankyrin repeat protein R599 (356 aa).

ANK repeat units lie at residues 111 to 143 (NDDI…FCDN), 152 to 182 (RLEK…NVNT), 183 to 213 (HNYE…KLSD), 215 to 238 (KRKI…ELEV), 239 to 266 (NFDD…GANI), and 267 to 298 (NSIP…DINN).

The protein is Putative ankyrin repeat protein R599 of Acanthamoeba polyphaga (Amoeba).